The following is a 304-amino-acid chain: Non-specific ribonucleoside hydrolase RihC (304 aa).

His-233 is an active-site residue.

This sequence belongs to the IUNH family. RihC subfamily.

In terms of biological role, hydrolyzes both purine and pyrimidine ribonucleosides with a broad-substrate specificity. The sequence is that of Non-specific ribonucleoside hydrolase RihC from Shigella boydii serotype 18 (strain CDC 3083-94 / BS512).